The chain runs to 1257 residues: Protein flightless-1 homolog (1257 aa).

16 LRR repeats span residues 6-31 (LQFV…VEQM), 32-54 (TQMT…LSRC), 56-77 (NLEH…LSDL), 78-102 (PRLR…IFRM), 103-126 (KDLT…EYAK), 128-148 (SIVL…VCAN), 149-172 (LIDL…IRRL), 174-195 (MLQS…QLPS), 197-221 (TSLS…LDDM), 222-244 (HNLR…LFKL), 246-267 (NLRK…EGEW), 268-290 (ENLE…VVKL), 292-315 (RLTK…IGKL), 316-338 (IQLT…ISRC), 339-361 (VKLQ…IHLL), and 363-384 (DLKV…PNDA). Gelsolin-like repeat units follow at residues 523–600 (MDEA…EEFL), 640–714 (AVEM…PEFW), 759–832 (ELPK…MMFR), and 1168–1243 (EKTV…CRFR).

Belongs to the villin/gelsolin family.

In terms of biological role, may play a key role in embryonic cellularization by interacting with both the cytoskeleton and other cellular components. In Caenorhabditis elegans, this protein is Protein flightless-1 homolog (fli-1).